A 330-amino-acid polypeptide reads, in one-letter code: DNA primase small subunit PriS (330 aa).

Catalysis depends on residues aspartate 101 and aspartate 103. Residues cysteine 116, cysteine 119, cysteine 128, and aspartate 131 each coordinate Zn(2+). Aspartate 235 is a catalytic residue.

Belongs to the eukaryotic-type primase small subunit family. As to quaternary structure, heterodimer of a small subunit (PriS) and a large subunit (PriL). Mg(2+) serves as cofactor. The cofactor is Mn(2+).

Functionally, catalytic subunit of DNA primase, an RNA polymerase that catalyzes the synthesis of short RNA molecules used as primers for DNA polymerase during DNA replication. The small subunit contains the primase catalytic core and has DNA synthesis activity on its own. Binding to the large subunit stabilizes and modulates the activity, increasing the rate of DNA synthesis while decreasing the length of the DNA fragments, and conferring RNA synthesis capability. The DNA polymerase activity may enable DNA primase to also catalyze primer extension after primer synthesis. May also play a role in DNA repair. This chain is DNA primase small subunit PriS, found in Saccharolobus islandicus (strain M.16.27) (Sulfolobus islandicus).